A 319-amino-acid chain; its full sequence is G-protein coupled receptor 171 (319 aa).

Topologically, residues 1-21 (MTNSSFFCPVYKDLEPFTYFF) are extracellular. N-linked (GlcNAc...) asparagine glycosylation is present at N3. Residues 22-42 (YLVFLVGIIGSCFATWAFIQK) traverse the membrane as a helical segment. The Cytoplasmic segment spans residues 43 to 48 (NTNHRC). Residues 49 to 69 (VSIYLINLLTADFLLTLALPV) traverse the membrane as a helical segment. At 70–89 (KIVVDLGVAPWKLKIFHCQV) the chain is on the extracellular side. The helical transmembrane segment at 90-110 (TACLIYINMYLSIIFLAFVSI) threads the bilayer. Topologically, residues 111 to 132 (DRCLQLTHSCKIYRIQEPGFAK) are cytoplasmic. The chain crosses the membrane as a helical span at residues 133-153 (MISTVVWLMVLLIMVPNMMIP). At 154-181 (IKDIKEKSNVGCMEFKKEFGRNWHLLTN) the chain is on the extracellular side. The helical transmembrane segment at 182 to 202 (FICVAIFLNFSAIILISNCLV) threads the bilayer. At 203 to 224 (IRQLYRNKDNENYPNVKKALIN) the chain is on the cytoplasmic side. Residues 225 to 245 (ILLVTTGYIICFVPYHIVRIP) traverse the membrane as a helical segment. Topologically, residues 246–268 (YTLSQTEVITDCSTRISLFKAKE) are extracellular. Residues 269 to 289 (ATLLLAVSNLCFDPILYYHLS) traverse the membrane as a helical segment. Over 290-319 (KAFRSKVTETFASPKETKAQKEKLRCENNA) the chain is Cytoplasmic.

Belongs to the G-protein coupled receptor 1 family. As to expression, expressed in both T-cell subsets and natural killer cells, while it is undetectable in B cells or CD14(+) monocytes. Expressed in peripheral blood mononuclear cells (PBMC) and Jurkat cells (at protein level).

It is found in the cell membrane. In terms of biological role, G-protein coupled receptor for Big LEN, a 16-amino acid neuropeptide produced from the precursor protein, proSAAS (encoded by PCSK1N). Acts through a G(i)-alpha-mediated pathway in response to Big LEN. Big LEN-GPR171 system plays an important role in regulating feeding and metabolism. Also plays a role in modulating fear and anxiety-like behaviors in the basolateral amygdala. Big LEN-GPR171 modulates the mu-type opioid receptor signaling and antinociception. Acts as a negative regulator T cell function. The polypeptide is G-protein coupled receptor 171 (Homo sapiens (Human)).